We begin with the raw amino-acid sequence, 319 residues long: Malate dehydrogenase (319 aa).

NAD(+)-binding positions include 7–13 (GAAGGIG) and Asp-34. Positions 81 and 87 each coordinate substrate. NAD(+)-binding positions include Asn-94 and 117-119 (ITN). Positions 119 and 153 each coordinate substrate. His-177 serves as the catalytic Proton acceptor. Met-227 serves as a coordination point for NAD(+).

This sequence belongs to the LDH/MDH superfamily. MDH type 1 family. In terms of assembly, homodimer.

It carries out the reaction (S)-malate + NAD(+) = oxaloacetate + NADH + H(+). Its function is as follows. Catalyzes the reversible oxidation of malate to oxaloacetate. This is Malate dehydrogenase from Psychromonas ingrahamii (strain DSM 17664 / CCUG 51855 / 37).